The following is a 118-amino-acid chain: uncharacterized protein (118 aa).

4 helical membrane-spanning segments follow: residues 12 to 32, 39 to 59, 63 to 83, and 98 to 118; these read IISL…FATF, LMPH…SLFI, IIGY…CPTI, and SAHL…VILF.

It is found in the cell membrane. This is an uncharacterized protein from Methanocaldococcus jannaschii (strain ATCC 43067 / DSM 2661 / JAL-1 / JCM 10045 / NBRC 100440) (Methanococcus jannaschii).